We begin with the raw amino-acid sequence, 213 residues long: Holliday junction resolvase RecU (213 aa).

Mg(2+) is bound by residues threonine 98, aspartate 100, glutamate 113, and glutamine 132.

It belongs to the RecU family. The cofactor is Mg(2+).

It localises to the cytoplasm. The catalysed reaction is Endonucleolytic cleavage at a junction such as a reciprocal single-stranded crossover between two homologous DNA duplexes (Holliday junction).. Functionally, endonuclease that resolves Holliday junction intermediates in genetic recombination. Cleaves mobile four-strand junctions by introducing symmetrical nicks in paired strands. Promotes annealing of linear ssDNA with homologous dsDNA. Required for DNA repair, homologous recombination and chromosome segregation. The polypeptide is Holliday junction resolvase RecU (Ligilactobacillus salivarius (strain UCC118) (Lactobacillus salivarius)).